A 457-amino-acid chain; its full sequence is Siroheme synthase (457 aa).

Residues 1 to 204 (MDHLPIFCQL…NDQKAITETT (204 aa)) form a precorrin-2 dehydrogenase /sirohydrochlorin ferrochelatase region. NAD(+) is bound by residues 22-23 (DV) and 43-44 (LA). Position 128 is a phosphoserine (serine 128). The interval 216–457 (GEVVLVGAGP…RDKLNWFSNH (242 aa)) is uroporphyrinogen-III C-methyltransferase. Proline 225 provides a ligand contact to S-adenosyl-L-methionine. Aspartate 248 (proton acceptor) is an active-site residue. Lysine 270 functions as the Proton donor in the catalytic mechanism. Residues 301–303 (GGD), isoleucine 306, 331–332 (TA), methionine 382, and glycine 411 contribute to the S-adenosyl-L-methionine site.

The protein in the N-terminal section; belongs to the precorrin-2 dehydrogenase / sirohydrochlorin ferrochelatase family. This sequence in the C-terminal section; belongs to the precorrin methyltransferase family.

The enzyme catalyses uroporphyrinogen III + 2 S-adenosyl-L-methionine = precorrin-2 + 2 S-adenosyl-L-homocysteine + H(+). It carries out the reaction precorrin-2 + NAD(+) = sirohydrochlorin + NADH + 2 H(+). It catalyses the reaction siroheme + 2 H(+) = sirohydrochlorin + Fe(2+). It participates in cofactor biosynthesis; adenosylcobalamin biosynthesis; precorrin-2 from uroporphyrinogen III: step 1/1. The protein operates within cofactor biosynthesis; adenosylcobalamin biosynthesis; sirohydrochlorin from precorrin-2: step 1/1. Its pathway is porphyrin-containing compound metabolism; siroheme biosynthesis; precorrin-2 from uroporphyrinogen III: step 1/1. It functions in the pathway porphyrin-containing compound metabolism; siroheme biosynthesis; siroheme from sirohydrochlorin: step 1/1. It participates in porphyrin-containing compound metabolism; siroheme biosynthesis; sirohydrochlorin from precorrin-2: step 1/1. Its function is as follows. Multifunctional enzyme that catalyzes the SAM-dependent methylations of uroporphyrinogen III at position C-2 and C-7 to form precorrin-2 via precorrin-1. Then it catalyzes the NAD-dependent ring dehydrogenation of precorrin-2 to yield sirohydrochlorin. Finally, it catalyzes the ferrochelation of sirohydrochlorin to yield siroheme. This Escherichia coli O45:K1 (strain S88 / ExPEC) protein is Siroheme synthase.